The primary structure comprises 198 residues: Ribosome maturation factor RimP (198 aa).

This sequence belongs to the RimP family.

It localises to the cytoplasm. Its function is as follows. Required for maturation of 30S ribosomal subunits. This is Ribosome maturation factor RimP from Rhizobium rhizogenes (strain K84 / ATCC BAA-868) (Agrobacterium radiobacter).